A 162-amino-acid polypeptide reads, in one-letter code: uncharacterized protein (162 aa).

The protein belongs to the A.longa ORF167/ORF288 family.

The protein resides in the plastid. This is an uncharacterized protein from Euglena longa (Euglenophycean alga).